Reading from the N-terminus, the 692-residue chain is Proprotein convertase subtilisin/kexin type 9 (692 aa).

The N-terminal stretch at 1–30 (MGTVSSRRSWWPLPLPLLLLLLLGLAGARA) is a signal peptide. A propeptide spanning residues 31 to 152 (QEDEDGDYEE…IEEDSSVFAQ (122 aa)) is cleaved from the precursor. Tyr-38 carries the post-translational modification Sulfotyrosine. Residue Ser-47 is modified to Phosphoserine. The region spanning 77–149 (TYVVVLKEET…VDYIEEDSSV (73 aa)) is the Inhibitor I9 domain. Residues 155 to 444 (PWNLERITPA…VLTPNLVAAL (290 aa)) form the Peptidase S8 domain. Catalysis depends on charge relay system residues Asp-186 and His-226. 2 disulfides stabilise this stretch: Cys-223/Cys-255 and Cys-323/Cys-358. The active-site Charge relay system is Ser-386. Residues 450-692 (RAGWQLFCRT…HLVQASQELQ (243 aa)) are C-terminal domain. Disulfide bonds link Cys-457-Cys-527, Cys-477-Cys-526, and Cys-486-Cys-509. The N-linked (GlcNAc...) asparagine glycan is linked to Asn-533. 6 disulfides stabilise this stretch: Cys-534–Cys-601, Cys-552–Cys-600, Cys-562–Cys-588, Cys-608–Cys-679, Cys-626–Cys-678, and Cys-635–Cys-654. Ser-688 carries the post-translational modification Phosphoserine.

Belongs to the peptidase S8 family. In terms of assembly, monomer. Can self-associate to form dimers and higher multimers which may have increased LDLR degrading activity. The precursor protein but not the mature protein may form multimers. Interacts with APOB, VLDLR, LRP8/APOER2 and BACE1. The full-length immature form (pro-PCSK9) interacts with SCNN1A, SCNN1B and SCNN1G. The pro-PCSK9 form (via C-terminal domain) interacts with LDLR. Interacts (via the C-terminal domain) with ANXA2 (via repeat Annexin 1); the interaction inhibits the degradation of LDLR. The cofactor is Ca(2+). Post-translationally, cleavage by furin and PCSK5 generates a truncated inactive protein that is unable to induce LDLR degradation. Undergoes autocatalytic cleavage in the endoplasmic reticulum to release the propeptide from the N-terminus and the cleavage of the propeptide is strictly required for its maturation and activation. The cleaved propeptide however remains associated with the catalytic domain through non-covalent interactions, preventing potential substrates from accessing its active site. As a result, it is secreted from cells as a propeptide-containing, enzymatically inactive protein. In terms of processing, phosphorylation protects the propeptide against proteolysis.

It localises to the cytoplasm. The protein localises to the secreted. The protein resides in the endosome. Its subcellular location is the lysosome. It is found in the cell surface. It localises to the endoplasmic reticulum. The protein localises to the golgi apparatus. Its proteolytic activity is autoinhibited by the non-covalent binding of the propeptide to the catalytic domain. Inhibited by EGTA. Its function is as follows. Crucial player in the regulation of plasma cholesterol homeostasis. Binds to low-density lipid receptor family members: low density lipoprotein receptor (LDLR), very low density lipoprotein receptor (VLDLR), apolipoprotein E receptor (LRP1/APOER) and apolipoprotein receptor 2 (LRP8/APOER2), and promotes their degradation in intracellular acidic compartments. Acts via a non-proteolytic mechanism to enhance the degradation of the hepatic LDLR through a clathrin LDLRAP1/ARH-mediated pathway. May prevent the recycling of LDLR from endosomes to the cell surface or direct it to lysosomes for degradation. Can induce ubiquitination of LDLR leading to its subsequent degradation. Inhibits intracellular degradation of APOB via the autophagosome/lysosome pathway in a LDLR-independent manner. Involved in the disposal of non-acetylated intermediates of BACE1 in the early secretory pathway. Inhibits epithelial Na(+) channel (ENaC)-mediated Na(+) absorption by reducing ENaC surface expression primarily by increasing its proteasomal degradation. Regulates neuronal apoptosis via modulation of LRP8/APOER2 levels and related anti-apoptotic signaling pathways. The sequence is that of Proprotein convertase subtilisin/kexin type 9 (PCSK9) from Colobus guereza (Mantled guereza).